A 308-amino-acid chain; its full sequence is Cytochrome b (308 aa).

4 helical membrane passes run 1–21 (FGSLLGICLMTQIITGLLMAM), 45–66 (WLIRNLHANGASMFFICIYLHI), 81–101 (WNTGVILLLTLMATAFVGYVL), and 146–166 (FFALHFLLPFMIAGLTFIHLT). 2 residues coordinate heme b: His-51 and His-65. Residues His-150 and His-164 each contribute to the heme b site. His-169 contacts a ubiquinone. The next 3 helical transmembrane spans lie at 194–214 (TKDILGFLAMLVPLTALAMFS), 256–276 (LGGVLALAASVLILFLIPFLH), and 288–308 (LSQLLFWILVTNLLILTWVGS).

It belongs to the cytochrome b family. As to quaternary structure, the cytochrome bc1 complex contains 11 subunits: 3 respiratory subunits (MT-CYB, CYC1 and UQCRFS1), 2 core proteins (UQCRC1 and UQCRC2) and 6 low-molecular weight proteins (UQCRH/QCR6, UQCRB/QCR7, UQCRQ/QCR8, UQCR10/QCR9, UQCR11/QCR10 and a cleavage product of UQCRFS1). This cytochrome bc1 complex then forms a dimer. Heme b is required as a cofactor.

It localises to the mitochondrion inner membrane. Its function is as follows. Component of the ubiquinol-cytochrome c reductase complex (complex III or cytochrome b-c1 complex) that is part of the mitochondrial respiratory chain. The b-c1 complex mediates electron transfer from ubiquinol to cytochrome c. Contributes to the generation of a proton gradient across the mitochondrial membrane that is then used for ATP synthesis. This chain is Cytochrome b (MT-CYB), found in Asthenes dorbignyi (Creamy-breasted canastero).